The following is a 241-amino-acid chain: Corrinoid adenosyltransferase MMAB (241 aa).

Residues 1–26 (MAVWGPGGRLGLRGCLGARKLLCPRF) constitute a mitochondrion transit peptide. Residues 27–69 (QSRGPQGVEDGDRPQPSSKTPKVPKIYTKTGDKGFSSTFTGER) form a disordered region. ATP is bound by residues 54-63 (TKTGDKGFSS) and Lys72. A Phosphoserine modification is found at Ser128. 184 to 188 (RRAER) serves as a coordination point for ATP. Lys205 carries the N6-succinyllysine modification. Position 208 (Asn208) interacts with ATP. Residue Lys224 is modified to N6-acetyllysine; alternate. Residue Lys224 is modified to N6-succinyllysine; alternate.

This sequence belongs to the Cob(I)alamin adenosyltransferase family. As to quaternary structure, homotrimer.

It localises to the mitochondrion. It catalyses the reaction cob(I)alamin-[corrinoid adenosyltransferase] + ATP = apo-[corrinoid adenosyltransferase] + adenosylcob(III)alamin + triphosphate. Its function is as follows. Converts cob(I)alamin to adenosylcobalamin (adenosylcob(III)alamin), a coenzyme for methylmalonyl-CoA mutase, therefore participates in the final step of the vitamin B12 conversion. Generates adenosylcobalamin (AdoCbl) and directly delivers the cofactor to MUT in a transfer that is stimulated by ATP-binding to MMAB and gated by MMAA. This is Corrinoid adenosyltransferase MMAB from Bos taurus (Bovine).